A 278-amino-acid chain; its full sequence is Nucleotide-binding protein Tbd_0529 (278 aa).

8 to 15 (GLSGSGKS) contacts ATP. Position 57–60 (57–60 (DARS)) interacts with GTP.

Belongs to the RapZ-like family.

Displays ATPase and GTPase activities. This is Nucleotide-binding protein Tbd_0529 from Thiobacillus denitrificans (strain ATCC 25259 / T1).